Here is a 635-residue protein sequence, read N- to C-terminus: S-type anion channel SLAH3 (635 aa).

At 1–253 (MEEKPNYVIQ…IVLPNDKKWP (253 aa)) the chain is on the cytoplasmic side. Positions 102-121 (SDPTTSLSSENHKNSGSTGK) are enriched in polar residues. Residues 102–173 (SDPTTSLSSE…SGHHQNQNQA (72 aa)) are disordered. The segment covering 153–165 (NHHHHLHRQHQSG) has biased composition (basic residues). At serine 189 the chain carries Phosphoserine. A disordered region spans residues 193–217 (ERQFTRKPASVEPEAPNRNNQNLNT). A helical membrane pass occupies residues 254–276 (FLLRYPISTFGMCLGVSSQAIMW). At 277-299 (KTLATAEPTKFLHVPLWINQGLW) the chain is on the extracellular side. The chain crosses the membrane as a helical span at residues 300 to 320 (FISVALILTIATIYLLKIILF). The Cytoplasmic segment spans residues 321–335 (FEAVRREYYHPIRIN). Residues 336 to 356 (FFFAPFISLLFLALGVPPSII) form a helical membrane-spanning segment. The Extracellular portion of the chain corresponds to 357 to 358 (TD). A helical membrane pass occupies residues 359 to 379 (LPHFLWYLLMFPFICLELKIY). The Cytoplasmic segment spans residues 380 to 396 (GQWMSGGQRRLSRVANP). Residues 397–417 (TNHLSVVGNFVGALLGASMGL) form a helical membrane-spanning segment. At 418-419 (RE) the chain is on the extracellular side. The chain crosses the membrane as a helical span at residues 420–440 (GPIFFYAVGMAHYLVLFVTLY). Over 441–455 (QRLPTNETLPKDLHP) the chain is Cytoplasmic. Residues 456–476 (VFFLFVAAPSVASMAWAKVTG) traverse the membrane as a helical segment. Serine 477 is a topological domain (extracellular). A helical transmembrane segment spans residues 478-498 (FDYGSKVCYFIAIFLYFSLAV). Residues 499-504 (RINFFR) lie on the Cytoplasmic side of the membrane. The chain crosses the membrane as a helical span at residues 505-525 (GIKFSLSWWAYTFPMTGAAIA). Residues 526–541 (TIRYATVVKSTMTQIM) lie on the Extracellular side of the membrane. The helical transmembrane segment at 542-562 (CVVLCAIATLVVFALLVTTII) threads the bilayer. The Cytoplasmic segment spans residues 563 to 635 (HAFVLRDLFP…NGKTQESDSS (73 aa)). Positions 611-635 (FTDSDSSQSNDVEACNGKTQESDSS) are disordered. Positions 614–635 (SDSSQSNDVEACNGKTQESDSS) are enriched in polar residues.

Belongs to the SLAC1 S-type anion channel family. In terms of assembly, homotrimer. Interacts with KAT1. Expressed in the whole plant, escpecially in vascular systems.

The protein localises to the cell membrane. In terms of biological role, slow, weak voltage-dependent S-type anion efflux channel involved in maintenance of anion homeostasis. Binds to the highly selective inward-rectifying potassium channel KAT1 and inhibits its activity. Functions as an essential negative regulator of inward potassium channels in guard cells. Essential for the efficient stomatal closure and opening in guard cells. The polypeptide is S-type anion channel SLAH3 (SLAH3) (Arabidopsis thaliana (Mouse-ear cress)).